Consider the following 706-residue polypeptide: Fatty acid oxidation complex subunit alpha (706 aa).

An enoyl-CoA hydratase region spans residues 1-188 (MEKTFNLTRR…KMGLVNDVVP (188 aa)). The interval 308–706 (RKVKKAVILG…TMARENVSFF (399 aa)) is 3-hydroxyacyl-CoA dehydrogenase.

It in the N-terminal section; belongs to the enoyl-CoA hydratase/isomerase family. In the central section; belongs to the 3-hydroxyacyl-CoA dehydrogenase family. As to quaternary structure, heterotetramer of two alpha chains (FadJ) and two beta chains (FadI).

It localises to the cytoplasm. The catalysed reaction is a (3S)-3-hydroxyacyl-CoA = a (2E)-enoyl-CoA + H2O. It carries out the reaction a 4-saturated-(3S)-3-hydroxyacyl-CoA = a (3E)-enoyl-CoA + H2O. It catalyses the reaction a (3S)-3-hydroxyacyl-CoA + NAD(+) = a 3-oxoacyl-CoA + NADH + H(+). The enzyme catalyses (3S)-3-hydroxybutanoyl-CoA = (3R)-3-hydroxybutanoyl-CoA. It participates in lipid metabolism; fatty acid beta-oxidation. Functionally, catalyzes the formation of a hydroxyacyl-CoA by addition of water on enoyl-CoA. Also exhibits 3-hydroxyacyl-CoA epimerase and 3-hydroxyacyl-CoA dehydrogenase activities. In Shewanella putrefaciens (strain CN-32 / ATCC BAA-453), this protein is Fatty acid oxidation complex subunit alpha.